Reading from the N-terminus, the 505-residue chain is MAKKPTALIILDGFANRESEHGNAVKLANKPNFDRYYNKYPTTQIEASGLDVGLPEGQMGNSEVGHMNIGAGRIVYQSLTRINKSIEDGDFFENDVLNNAIAHVNSHDSALHIFGLLSDGGVHSHYKHLFALLELAKKQGVEKVYVHAFLDGRDVDQKSALKYIEETEAKFNELGIGQFASVSGRYYAMDRDKRWEREEKAYNAIRNFDAPTYATAKEGVEASYNEGLTDEFVVPFIVEDQNDGVNDGDAVIFYNFRPDRAAQLSEIFANRAFEGFKVEQVKDLFYATFTKYNDNIDAAIVFEKVDLNNTIGEIAQNNNLTQLRIAETEKYPHVTYFMSGGRNEEFKGERRRLIDSPKVATYDLKPEMSAYEVKDALLEELNKGDLDLIILNFANPDMVGHSGMLEPTIKAIEAVDECLGEVVDKILDMDGYAIITADHGNSDQVLTDDDQPMTTHTTNPVPVIVTKEGVTLRETGRLGDLAPTLLDLLNVEQPEDMTGESLIKH.

The Mn(2+) site is built by Asp12 and Ser62. Ser62 functions as the Phosphoserine intermediate in the catalytic mechanism. Substrate-binding positions include His123, 153–154, Arg185, Arg191, 257–260, and Lys330; these read RD and RPDR. The Mn(2+) site is built by Asp397, His401, Asp438, His439, and His456.

It belongs to the BPG-independent phosphoglycerate mutase family. As to quaternary structure, monomer. It depends on Mn(2+) as a cofactor.

The enzyme catalyses (2R)-2-phosphoglycerate = (2R)-3-phosphoglycerate. Its pathway is carbohydrate degradation; glycolysis; pyruvate from D-glyceraldehyde 3-phosphate: step 3/5. In terms of biological role, catalyzes the interconversion of 2-phosphoglycerate and 3-phosphoglycerate. This Staphylococcus aureus (strain MRSA252) protein is 2,3-bisphosphoglycerate-independent phosphoglycerate mutase.